The primary structure comprises 319 residues: Cobalamin biosynthesis protein CbiB (319 aa).

Helical transmembrane passes span 56 to 76 (VMWV…LALA), 82 to 102 (WFGW…RSLA), 153 to 173 (VDGI…LAMA), 204 to 224 (VANY…AGLC), and 296 to 316 (LMWV…CGLS).

This sequence belongs to the CobD/CbiB family.

It is found in the cell membrane. It participates in cofactor biosynthesis; adenosylcobalamin biosynthesis. In terms of biological role, converts cobyric acid to cobinamide by the addition of aminopropanol on the F carboxylic group. However, the true cosubstrate could be (R)-1-amino-2-propanol O-2-phosphate, leading to cobinamide phosphate. The polypeptide is Cobalamin biosynthesis protein CbiB (Salmonella paratyphi B (strain ATCC BAA-1250 / SPB7)).